Here is a 596-residue protein sequence, read N- to C-terminus: Elongation factor 4 (596 aa).

The 183-residue stretch at 2–184 (KHIRNFSIIA…VIVEQIPPPE (183 aa)) folds into the tr-type G domain. GTP contacts are provided by residues 14–19 (DHGKST) and 131–134 (NKID).

Belongs to the TRAFAC class translation factor GTPase superfamily. Classic translation factor GTPase family. LepA subfamily.

It localises to the cell inner membrane. It catalyses the reaction GTP + H2O = GDP + phosphate + H(+). Required for accurate and efficient protein synthesis under certain stress conditions. May act as a fidelity factor of the translation reaction, by catalyzing a one-codon backward translocation of tRNAs on improperly translocated ribosomes. Back-translocation proceeds from a post-translocation (POST) complex to a pre-translocation (PRE) complex, thus giving elongation factor G a second chance to translocate the tRNAs correctly. Binds to ribosomes in a GTP-dependent manner. This Shewanella pealeana (strain ATCC 700345 / ANG-SQ1) protein is Elongation factor 4.